The following is a 637-amino-acid chain: Glutamate--cysteine ligase catalytic subunit (637 aa).

Methionine 1 carries the post-translational modification N-acetylmethionine. A phosphoserine mark is found at serine 5 and serine 8.

This sequence belongs to the glutamate--cysteine ligase type 3 family. As to quaternary structure, heterodimer of a catalytic heavy chain and a regulatory light chain. Most abundant in kidney. Also found in liver and testis.

The enzyme catalyses L-cysteine + L-glutamate + ATP = gamma-L-glutamyl-L-cysteine + ADP + phosphate + H(+). The catalysed reaction is (2S)-2-aminobutanoate + L-glutamate + ATP = gamma-L-glutamyl-(2S)-2-aminobutanoate + ADP + phosphate + H(+). The protein operates within sulfur metabolism; glutathione biosynthesis; glutathione from L-cysteine and L-glutamate: step 1/2. Its activity is regulated as follows. Feedback inhibition by glutathione. Its function is as follows. Catalyzes the ATP-dependent ligation of L-glutamate and L-cysteine and participates in the first and rate-limiting step in glutathione biosynthesis. The chain is Glutamate--cysteine ligase catalytic subunit from Rattus norvegicus (Rat).